The following is a 599-amino-acid chain: Elongation factor 4 (599 aa).

The tr-type G domain maps to 2–185; sequence ENIRNFSIIA…AITKRIPPPK (184 aa). GTP-binding positions include 14–19 and 132–135; these read DHGKST and NKID.

Belongs to the TRAFAC class translation factor GTPase superfamily. Classic translation factor GTPase family. LepA subfamily.

The protein resides in the cell inner membrane. The catalysed reaction is GTP + H2O = GDP + phosphate + H(+). Required for accurate and efficient protein synthesis under certain stress conditions. May act as a fidelity factor of the translation reaction, by catalyzing a one-codon backward translocation of tRNAs on improperly translocated ribosomes. Back-translocation proceeds from a post-translocation (POST) complex to a pre-translocation (PRE) complex, thus giving elongation factor G a second chance to translocate the tRNAs correctly. Binds to ribosomes in a GTP-dependent manner. This Hydrogenobaculum sp. (strain Y04AAS1) protein is Elongation factor 4.